A 388-amino-acid polypeptide reads, in one-letter code: Protein DJ-1 homolog D (388 aa).

PfpI endopeptidase domains are found at residues 5-190 and 198-383; these read RTVL…KALG and KRIL…ALLG. Cys-120 serves as the catalytic Nucleophile. Cys-120 is modified (cysteine sulfenic acid (-SOH)). The active site involves His-121. Cys-313 acts as the Nucleophile in catalysis. The residue at position 313 (Cys-313) is a Cysteine sulfinic acid (-SO2H). His-314 is a catalytic residue.

The protein belongs to the peptidase C56 family. As to quaternary structure, homotrimer. Cys-120 and Cys-313 are oxidized to sulfinic acid.

The catalysed reaction is (R)-S-lactoylglutathione = methylglyoxal + glutathione. Functionally, possesses glyoxalase I activity. Catalyzes the conversion of hemimercaptal, formed from methylglyoxal and glutathione, to S-lactoylglutathione. May be involved in oxidative stress response. This chain is Protein DJ-1 homolog D (DJ1D), found in Arabidopsis thaliana (Mouse-ear cress).